The primary structure comprises 305 residues: Elongation factor Ts, mitochondrial (305 aa).

The protein belongs to the EF-Ts family.

It is found in the mitochondrion. In terms of biological role, associates with the EF-Tu.GDP complex and induces the exchange of GDP to GTP. It remains bound to the aminoacyl-tRNA.EF-Tu.GTP complex up to the GTP hydrolysis stage on the ribosome. This is Elongation factor Ts, mitochondrial (tsfm) from Danio rerio (Zebrafish).